The primary structure comprises 61 residues: MAKKSMIVKAAREPKFKVRGYTRCQICGRPHSVIRDFGICRVCFRKMANEGLIPGVRKSSW.

Zn(2+)-binding residues include cysteine 24, cysteine 27, cysteine 40, and cysteine 43.

This sequence belongs to the universal ribosomal protein uS14 family. Zinc-binding uS14 subfamily. In terms of assembly, part of the 30S ribosomal subunit. Contacts proteins S3 and S10. Requires Zn(2+) as cofactor.

In terms of biological role, binds 16S rRNA, required for the assembly of 30S particles and may also be responsible for determining the conformation of the 16S rRNA at the A site. This Sulfurimonas denitrificans (strain ATCC 33889 / DSM 1251) (Thiomicrospira denitrificans (strain ATCC 33889 / DSM 1251)) protein is Small ribosomal subunit protein uS14.